We begin with the raw amino-acid sequence, 505 residues long: 4-trimethylaminobutyraldehyde dehydrogenase (505 aa).

Residues K191 and 243–247 (GSVPT) contribute to the NAD(+) site. The Proton acceptor role is filled by E265. Catalysis depends on C299, which acts as the Nucleophile. E402 is an NAD(+) binding site.

It belongs to the aldehyde dehydrogenase family. Homotetramer. Constitutively expressed in all organs tested: brain, eye, gill, GI, heart, liver, kidney, muscle, skin, testis and ovary.

It is found in the cytoplasm. It localises to the cytosol. It catalyses the reaction 4-(trimethylamino)butanal + NAD(+) + H2O = 4-(trimethylamino)butanoate + NADH + 2 H(+). The enzyme catalyses an aldehyde + NAD(+) + H2O = a carboxylate + NADH + 2 H(+). The protein operates within amine and polyamine biosynthesis; carnitine biosynthesis. Functionally, converts gamma-trimethylaminobutyraldehyde into gamma-butyrobetaine with high efficiency (in vitro). Can catalyze the irreversible oxidation of a broad range of aldehydes to the corresponding acids in an NAD-dependent reaction, but with low efficiency. This Oryzias latipes (Japanese rice fish) protein is 4-trimethylaminobutyraldehyde dehydrogenase (aldh9A1).